The primary structure comprises 150 residues: Azurin (150 aa).

The signal sequence occupies residues 1–21 (MFKQVLGGMALMAAFSAPVLA). Residues 22 to 150 (AECSVDIAGT…LMKGTLKLVD (129 aa)) form the Plastocyanin-like domain. Cys-24 and Cys-47 form a disulfide bridge. Residues His-67, Cys-133, His-138, and Met-142 each contribute to the Cu cation site.

It localises to the periplasm. This chain is Azurin, found in Bordetella bronchiseptica (strain ATCC BAA-588 / NCTC 13252 / RB50) (Alcaligenes bronchisepticus).